The following is a 240-amino-acid chain: 6-phosphogluconolactonase (240 aa).

It belongs to the glucosamine/galactosamine-6-phosphate isomerase family. 6-phosphogluconolactonase subfamily.

The enzyme catalyses 6-phospho-D-glucono-1,5-lactone + H2O = 6-phospho-D-gluconate + H(+). It functions in the pathway carbohydrate degradation; pentose phosphate pathway; D-ribulose 5-phosphate from D-glucose 6-phosphate (oxidative stage): step 2/3. Functionally, hydrolysis of 6-phosphogluconolactone to 6-phosphogluconate. This Synechocystis sp. (strain ATCC 27184 / PCC 6803 / Kazusa) protein is 6-phosphogluconolactonase (pgl).